The primary structure comprises 490 residues: Betaine aldehyde dehydrogenase (490 aa).

Residues Thr-26, Ile-27, and Asp-93 each contribute to the K(+) site. Residue 150 to 152 (GAW) coordinates NAD(+). Lys-162 functions as the Charge relay system in the catalytic mechanism. Residue 176–179 (KPSE) coordinates NAD(+). Val-180 provides a ligand contact to K(+). An NAD(+)-binding site is contributed by 230 to 233 (GVAS). Position 246 (Leu-246) interacts with K(+). Glu-252 acts as the Proton acceptor in catalysis. Gly-254, Cys-286, and Glu-387 together coordinate NAD(+). The active-site Nucleophile is Cys-286. Cys-286 carries the post-translational modification Cysteine sulfenic acid (-SOH). K(+) contacts are provided by Lys-457 and Gly-460. The active-site Charge relay system is Glu-464.

The protein belongs to the aldehyde dehydrogenase family. In terms of assembly, dimer of dimers. The cofactor is K(+).

The enzyme catalyses betaine aldehyde + NAD(+) + H2O = glycine betaine + NADH + 2 H(+). Its pathway is amine and polyamine biosynthesis; betaine biosynthesis via choline pathway; betaine from betaine aldehyde: step 1/1. Functionally, involved in the biosynthesis of the osmoprotectant glycine betaine. Catalyzes the irreversible oxidation of betaine aldehyde to the corresponding acid. This Escherichia coli O157:H7 protein is Betaine aldehyde dehydrogenase.